Here is a 615-residue protein sequence, read N- to C-terminus: ATP-dependent RNA helicase DBP9 (615 aa).

The tract at residues methionine 1 to glutamate 37 is disordered. Positions aspartate 25–glutamate 37 are enriched in basic and acidic residues. Positions threonine 40–arginine 68 match the Q motif motif. The Helicase ATP-binding domain occupies isoleucine 71–leucine 248. Alanine 84 to threonine 91 is a binding site for ATP. The short motif at aspartate 196 to aspartate 199 is the DEAD box element. Residues glycine 259–aspartate 491 form the Helicase C-terminal domain. Acidic residues predominate over residues glycine 351–glutamine 363. Disordered regions lie at residues glycine 351–tyrosine 396 and lysine 583–lysine 615. The segment covering lysine 583–glycine 594 has biased composition (basic residues).

It belongs to the DEAD box helicase family. DDX56/DBP9 subfamily.

It is found in the nucleus. Its subcellular location is the nucleolus. The enzyme catalyses ATP + H2O = ADP + phosphate + H(+). ATP-binding RNA helicase involved in the biogenesis of 60S ribosomal subunits and is required for the normal formation of 25S and 5.8S rRNAs. This Gibberella zeae (strain ATCC MYA-4620 / CBS 123657 / FGSC 9075 / NRRL 31084 / PH-1) (Wheat head blight fungus) protein is ATP-dependent RNA helicase DBP9 (DBP9).